A 154-amino-acid polypeptide reads, in one-letter code: 6,7-dimethyl-8-ribityllumazine synthase (154 aa).

5-amino-6-(D-ribitylamino)uracil-binding positions include Trp22, 56 to 58 (AWE), and 80 to 82 (CVI). 85-86 (DT) is a binding site for (2S)-2-hydroxy-3-oxobutyl phosphate. His88 (proton donor) is an active-site residue. Asn113 is a 5-amino-6-(D-ribitylamino)uracil binding site. Arg127 provides a ligand contact to (2S)-2-hydroxy-3-oxobutyl phosphate.

The protein belongs to the DMRL synthase family. Forms an icosahedral capsid composed of 60 subunits, arranged as a dodecamer of pentamers.

The catalysed reaction is (2S)-2-hydroxy-3-oxobutyl phosphate + 5-amino-6-(D-ribitylamino)uracil = 6,7-dimethyl-8-(1-D-ribityl)lumazine + phosphate + 2 H2O + H(+). It functions in the pathway cofactor biosynthesis; riboflavin biosynthesis; riboflavin from 2-hydroxy-3-oxobutyl phosphate and 5-amino-6-(D-ribitylamino)uracil: step 1/2. Catalyzes the formation of 6,7-dimethyl-8-ribityllumazine by condensation of 5-amino-6-(D-ribitylamino)uracil with 3,4-dihydroxy-2-butanone 4-phosphate. This is the penultimate step in the biosynthesis of riboflavin. In Xanthomonas campestris pv. campestris (strain 8004), this protein is 6,7-dimethyl-8-ribityllumazine synthase.